The chain runs to 771 residues: Phosphoglycerate kinase (771 aa).

The interval 1–406 is phosphoglycerate kinase; the sequence is MKKLITDLNL…PGIDAIQNYE (406 aa). Substrate contacts are provided by residues 20-22, R35, 58-61, R118, and R155; these read DLN and HLGR. ATP-binding positions include K206, G295, E334, and 361 to 364; that span reads GGDS. A unknown region spans residues 407 to 771; the sequence is QTYEQYDSQV…KRFWFFGRKR (365 aa).

This sequence in the N-terminal section; belongs to the phosphoglycerate kinase family. Monomer.

The protein resides in the cytoplasm. The enzyme catalyses (2R)-3-phosphoglycerate + ATP = (2R)-3-phospho-glyceroyl phosphate + ADP. It functions in the pathway carbohydrate degradation; glycolysis; pyruvate from D-glyceraldehyde 3-phosphate: step 2/5. The protein is Phosphoglycerate kinase (pgk) of Mycoplasmopsis pulmonis (strain UAB CTIP) (Mycoplasma pulmonis).